We begin with the raw amino-acid sequence, 164 residues long: Small ribosomal subunit protein uS5 (164 aa).

The region spanning 11–74 is the S5 DRBM domain; it reads LKEKLISVNR…EKARKNMIII (64 aa).

Belongs to the universal ribosomal protein uS5 family. Part of the 30S ribosomal subunit. Contacts proteins S4 and S8.

In terms of biological role, with S4 and S12 plays an important role in translational accuracy. Its function is as follows. Located at the back of the 30S subunit body where it stabilizes the conformation of the head with respect to the body. The chain is Small ribosomal subunit protein uS5 from Buchnera aphidicola subsp. Cinara cedri (strain Cc).